Consider the following 124-residue polypeptide: CD59 glycoprotein (124 aa).

A signal peptide spans 1-24 (MTSRGVHLLLRLLFLLAVFYSSDS). Residues 25–101 (SLMCYHCLLP…DLCNGPEDDG (77 aa)) form the UPAR/Ly6 domain. Cystine bridges form between C28-C51, C31-C38, C44-C64, C70-C88, and C89-C94. N-linked (GlcNAc...) asparagine glycosylation is present at N37. The GPI-anchor amidated glycine moiety is linked to residue G101. The propeptide at 102-124 (TALTGRTVLLVAPLLAAARNLCL) is removed in mature form.

In terms of assembly, interacts with T-cell surface antigen CD2. N- and O-glycosylated.

It is found in the cell membrane. It localises to the secreted. In terms of biological role, potent inhibitor of the complement membrane attack complex (MAC) action, which protects self-cells from damage during complement activation. Acts by binding to the beta-haipins of C8 (C8A and C8B) components of the assembling MAC, forming an intermolecular beta-sheet that prevents incorporation of the multiple copies of C9 required for complete formation of the osmolytic pore. This chain is CD59 glycoprotein, found in Oryctolagus cuniculus (Rabbit).